Reading from the N-terminus, the 321-residue chain is Methionyl-tRNA formyltransferase (321 aa).

Position 112–115 (Ser-112–Pro-115) interacts with (6S)-5,6,7,8-tetrahydrofolate.

The protein belongs to the Fmt family.

The enzyme catalyses L-methionyl-tRNA(fMet) + (6R)-10-formyltetrahydrofolate = N-formyl-L-methionyl-tRNA(fMet) + (6S)-5,6,7,8-tetrahydrofolate + H(+). Functionally, attaches a formyl group to the free amino group of methionyl-tRNA(fMet). The formyl group appears to play a dual role in the initiator identity of N-formylmethionyl-tRNA by promoting its recognition by IF2 and preventing the misappropriation of this tRNA by the elongation apparatus. This chain is Methionyl-tRNA formyltransferase, found in Shewanella piezotolerans (strain WP3 / JCM 13877).